We begin with the raw amino-acid sequence, 554 residues long: CTP synthase (554 aa).

The segment at Met1–Leu265 is amidoligase domain. Residue Ser13 coordinates CTP. Ser13 is a UTP binding site. Residues Ser14 to Ile19 and Asp71 contribute to the ATP site. Positions 71 and 139 each coordinate Mg(2+). CTP contacts are provided by residues Asp146–Glu148, Lys186–Gln191, and Lys222. UTP-binding positions include Lys186–Gln191 and Lys222. In terms of domain architecture, Glutamine amidotransferase type-1 spans Thr292–Gly545. Gly353 contributes to the L-glutamine binding site. The Nucleophile; for glutamine hydrolysis role is filled by Cys380. Residues Tyr381–Gln384, Glu404, and Arg471 contribute to the L-glutamine site. Catalysis depends on residues His518 and Glu520.

It belongs to the CTP synthase family. Homotetramer.

It carries out the reaction UTP + L-glutamine + ATP + H2O = CTP + L-glutamate + ADP + phosphate + 2 H(+). The enzyme catalyses L-glutamine + H2O = L-glutamate + NH4(+). The catalysed reaction is UTP + NH4(+) + ATP = CTP + ADP + phosphate + 2 H(+). Its pathway is pyrimidine metabolism; CTP biosynthesis via de novo pathway; CTP from UDP: step 2/2. With respect to regulation, allosterically activated by GTP, when glutamine is the substrate; GTP has no effect on the reaction when ammonia is the substrate. The allosteric effector GTP functions by stabilizing the protein conformation that binds the tetrahedral intermediate(s) formed during glutamine hydrolysis. Inhibited by the product CTP, via allosteric rather than competitive inhibition. Catalyzes the ATP-dependent amination of UTP to CTP with either L-glutamine or ammonia as the source of nitrogen. Regulates intracellular CTP levels through interactions with the four ribonucleotide triphosphates. This is CTP synthase from Xylella fastidiosa (strain M23).